We begin with the raw amino-acid sequence, 270 residues long: Glutamate racemase (270 aa).

Residues 10 to 11 and 42 to 43 each bind substrate; these read DS and YG. The Proton donor/acceptor role is filled by Cys-74. 75-76 lines the substrate pocket; sequence NT. The active-site Proton donor/acceptor is the Cys-189. Residue 190–191 participates in substrate binding; sequence TH.

It belongs to the aspartate/glutamate racemases family.

The catalysed reaction is L-glutamate = D-glutamate. Its pathway is cell wall biogenesis; peptidoglycan biosynthesis. Its function is as follows. Provides the (R)-glutamate required for cell wall biosynthesis. The chain is Glutamate racemase from Bartonella quintana (strain Toulouse) (Rochalimaea quintana).